The primary structure comprises 516 residues: DNA-(apurinic or apyrimidinic site) endonuclease 2 (516 aa).

Residues Asn-8 and Glu-47 each contribute to the Mg(2+) site. The active site involves Tyr-155. The Mg(2+) site is built by Asp-196, Asn-198, Asp-302, and His-303. Asp-196 (proton donor/acceptor) is an active-site residue. Catalysis depends on His-303, which acts as the Proton acceptor. The segment covering 357 to 366 (QPSHQIQAQR) has biased composition (polar residues). A disordered region spans residues 357–389 (QPSHQIQAQRQPRKACMHSTRLRKSQGGPKRKQ). The span at 367–389 (QPRKACMHSTRLRKSQGGPKRKQ) shows a compositional bias: basic residues. Lys-370 participates in a covalent cross-link: Glycyl lysine isopeptide (Lys-Gly) (interchain with G-Cter in ubiquitin). The segment at 389 to 396 (QKNLMSYF) is required for the interaction and colocalization with PCNA in nuclear foci in presence of oxidative-induced DNA damaging agents. Zn(2+)-binding residues include Cys-467, His-470, Cys-493, and Cys-507. A GRF-type zinc finger spans residues 467–516 (CGGHREPCVMRTVKKTGPNFGRQFYMCARPRGPPSDPSSRCNFFLWSRPS).

Belongs to the DNA repair enzymes AP/ExoA family. Interacts with PCNA. This interaction is increased by misincorporation of uracil in nuclear DNA. Mg(2+) serves as cofactor. It depends on Mn(2+) as a cofactor. Ubiquitinated by the CUL9-RBX1 complex. Ubiquitinated by MKRN3 at Lys-370 leading to proteasomal degradation. As to expression, expressed in lymphocytes, thymocytes and splenocytes (at protein level). Highly expressed in the thymus and weakly expressed in the bone marrow, spleen, eye, kidney, lung, brain and uterus.

It is found in the nucleus. The protein resides in the cytoplasm. The protein localises to the mitochondrion. It catalyses the reaction Exonucleolytic cleavage in the 3'- to 5'-direction to yield nucleoside 5'-phosphates.. With respect to regulation, 3'-5' exonuclease activity is activated by sodium and manganese. 3'-5' exonuclease and 3'-phosphodiesterase activities are stimulated in presence of PCNA. Its function is as follows. Functions as a weak apurinic/apyrimidinic (AP) endodeoxyribonuclease in the DNA base excision repair (BER) pathway of DNA lesions induced by oxidative and alkylating agents. Initiates repair of AP sites in DNA by catalyzing hydrolytic incision of the phosphodiester backbone immediately adjacent to the damage, generating a single-strand break with 5'-deoxyribose phosphate and 3'-hydroxyl ends. Also displays double-stranded DNA 3'-5' exonuclease, 3'-phosphodiesterase activities. Shows robust 3'-5' exonuclease activity on 3'-recessed heteroduplex DNA and is able to remove mismatched nucleotides preferentially. Shows fairly strong 3'-phosphodiesterase activity involved in the removal of 3'-damaged termini formed in DNA by oxidative agents. In the nucleus functions in the PCNA-dependent BER pathway. Plays a role in reversing blocked 3' DNA ends, problematic lesions that preclude DNA synthesis. Required for somatic hypermutation (SHM) and DNA cleavage step of class switch recombination (CSR) of immunoglobulin genes. Required for proper cell cycle progression during proliferation of peripheral lymphocytes. The polypeptide is DNA-(apurinic or apyrimidinic site) endonuclease 2 (Apex2) (Mus musculus (Mouse)).